The sequence spans 318 residues: Ferrochelatase (318 aa).

2 residues coordinate Fe cation: H186 and E264.

This sequence belongs to the ferrochelatase family.

Its subcellular location is the cytoplasm. It carries out the reaction heme b + 2 H(+) = protoporphyrin IX + Fe(2+). It participates in porphyrin-containing compound metabolism; protoheme biosynthesis; protoheme from protoporphyrin-IX: step 1/1. Its function is as follows. Catalyzes the ferrous insertion into protoporphyrin IX. This is Ferrochelatase from Chlamydia abortus (strain DSM 27085 / S26/3) (Chlamydophila abortus).